The chain runs to 845 residues: Molybdenum cofactor sulfurase (845 aa).

K240 is modified (N6-(pyridoxal phosphate)lysine). Residue C404 is part of the active site. Residues 666 to 840 (SFPQDSSPSS…LMVGDTVTPS (175 aa)) enclose the MOSC domain.

The protein belongs to the class-V pyridoxal-phosphate-dependent aminotransferase family. MOCOS subfamily. The cofactor is pyridoxal 5'-phosphate.

It catalyses the reaction Mo-molybdopterin + L-cysteine + AH2 = thio-Mo-molybdopterin + L-alanine + A + H2O. The protein operates within cofactor biosynthesis; molybdopterin biosynthesis. Its function is as follows. Sulfurates the molybdenum cofactor. Sulfation of molybdenum is essential for xanthine dehydrogenase (XDH) and aldehyde oxidase (ADO) enzymes in which molybdenum cofactor is liganded by 1 oxygen and 1 sulfur atom in active form. The chain is Molybdenum cofactor sulfurase from Aspergillus clavatus (strain ATCC 1007 / CBS 513.65 / DSM 816 / NCTC 3887 / NRRL 1 / QM 1276 / 107).